A 1082-amino-acid polypeptide reads, in one-letter code: Inner tegument protein (1082 aa).

Residues 604–1082 are interaction with large tegument protein; the sequence is DHIECLFNVS…QQDLITPLKF (479 aa).

It belongs to the herpesviridae inner tegument protein family. Interacts (via C-terminus) with the large tegument protein/LTP (via N-terminus).

The protein localises to the virion tegument. The protein resides in the host cytoplasm. It is found in the host nucleus. Its subcellular location is the host Golgi apparatus. It localises to the host trans-Golgi network. In terms of biological role, plays an essential role in cytoplasmic secondary envelopment during viral egress. Interacts with the capsid via the large tegument protein/LTP and participates in its transport to the host trans-Golgi network (TGN) where secondary envelopment occurs. Modulates tegumentation and capsid accumulation at the viral assembly complex. The sequence is that of Inner tegument protein (U30) from Homo sapiens (Human).